We begin with the raw amino-acid sequence, 256 residues long: Large ribosomal subunit protein eL8y (256 aa).

Residues 1-15 (MAPKKGVKVASKKKP) show a composition bias toward basic residues. The tract at residues 1-20 (MAPKKGVKVASKKKPEKVTN) is disordered.

The protein belongs to the eukaryotic ribosomal protein eL8 family.

This Arabidopsis thaliana (Mouse-ear cress) protein is Large ribosomal subunit protein eL8y (RPL7AB).